Reading from the N-terminus, the 323-residue chain is tRNA-dihydrouridine synthase B (323 aa).

FMN contacts are provided by residues 16–18 (PMA) and glutamine 70. Cysteine 100 (proton donor) is an active-site residue. FMN-binding positions include lysine 139, 200–202 (NGD), and 224–225 (GR).

The protein belongs to the Dus family. DusB subfamily. It depends on FMN as a cofactor.

The enzyme catalyses a 5,6-dihydrouridine in tRNA + NAD(+) = a uridine in tRNA + NADH + H(+). It catalyses the reaction a 5,6-dihydrouridine in tRNA + NADP(+) = a uridine in tRNA + NADPH + H(+). Its function is as follows. Catalyzes the synthesis of 5,6-dihydrouridine (D), a modified base found in the D-loop of most tRNAs, via the reduction of the C5-C6 double bond in target uridines. The polypeptide is tRNA-dihydrouridine synthase B (Proteus vulgaris).